A 269-amino-acid chain; its full sequence is MTSHDPKAVTRRTKVAPTKRMSRFLKHFTVVGDDYHTWNVNYKKWENEEEEEEPAPTSAEGEGNAEGPDAEAGSASTPRQSLDFRSRLRKLFSSHRFQVIIICLVVLDALLVLAELLLDLKIIEPDEQDYAVTAFHYMSFAILVFFMLEIFFKIFVFRLEFFHHKFEILDAFVVVVSFVLDLVLLFKSHHFEALGLLILLRLWRVARIINGIIISVKTRSERQILRLKQINIQLATKIQHLEFSCSEKEQEIERLNKLLKQNGLLGDVN.

The Cytoplasmic segment spans residues methionine 1–arginine 96. Threonine 29 bears the Phosphothreonine mark. The tract at residues glutamate 46 to arginine 79 is disordered. Serine 93 is subject to Phosphoserine. Residues phenylalanine 97–leucine 117 form a helical membrane-spanning segment. The Extracellular segment spans residues leucine 118–alanine 134. A helical membrane pass occupies residues phenylalanine 135 to phenylalanine 157. At arginine 158 to lysine 165 the chain is on the cytoplasmic side. The helical transmembrane segment at phenylalanine 166–phenylalanine 186 threads the bilayer. At lysine 187 to alanine 193 the chain is on the extracellular side. A helical transmembrane segment spans residues leucine 194–isoleucine 214. Topologically, residues serine 215–asparagine 269 are cytoplasmic. Residues glutamate 221–glutamine 261 adopt a coiled-coil conformation.

This sequence belongs to the voltage-gated proton channel (VPC) (TC 1.A.51) family. As to quaternary structure, homodimer; each protomer forms its own proton conduction pathway. In terms of processing, phosphorylated in vitro by PRKCD. Phosphorylation may enhance channel gating. As to expression, enriched in immune tissues, such as bone marrow, macrophages and spleen.

It localises to the cell membrane. Its subcellular location is the apical cell membrane. The protein localises to the cytoplasmic vesicle. The protein resides in the phagosome membrane. It is found in the cell projection. It localises to the cilium. Its subcellular location is the flagellum membrane. It catalyses the reaction H(+)(in) = H(+)(out). The dimers display cooperative channel gating. The channel activity is inhibited by zinc ions. In terms of biological role, voltage-gated proton-selective channel that conducts outward proton currents in response to intracellular acidification. Lacks a canonical ion-channel pore domain and mediates proton permeability via its voltage sensor domain. Provides for proton efflux that compensates for electron charge generated by NADPH oxidase activity either in the extracellular or phagosomal compartments, thus enabling the production of high levels of bactericidal reactive oxygen species during the respiratory burst. Opens when the pH of airway surface liquid exceeds 7 and contributes to respiratory epithelial acid secretion to maintain pH in the mucosa. In Mus musculus (Mouse), this protein is Voltage-gated hydrogen channel 1.